Here is a 58-residue protein sequence, read N- to C-terminus: Large ribosomal subunit protein bL32 (58 aa).

Disordered stretches follow at residues 1 to 22 and 39 to 58; these read MAVPKKKTSNAKRDQRKAHWKR and LSGRSNSFVYPQDEEEDDEE.

The protein belongs to the bacterial ribosomal protein bL32 family.

In Crocosphaera subtropica (strain ATCC 51142 / BH68) (Cyanothece sp. (strain ATCC 51142)), this protein is Large ribosomal subunit protein bL32.